We begin with the raw amino-acid sequence, 378 residues long: Erythronate-4-phosphate dehydrogenase (378 aa).

Residues S45 and T66 each coordinate substrate. The NAD(+) site is built by D146 and T175. Residue R208 is part of the active site. D232 lines the NAD(+) pocket. E237 is a catalytic residue. H254 functions as the Proton donor in the catalytic mechanism. G257 contributes to the NAD(+) binding site. Y258 lines the substrate pocket.

Belongs to the D-isomer specific 2-hydroxyacid dehydrogenase family. PdxB subfamily. As to quaternary structure, homodimer.

It is found in the cytoplasm. The enzyme catalyses 4-phospho-D-erythronate + NAD(+) = (R)-3-hydroxy-2-oxo-4-phosphooxybutanoate + NADH + H(+). Its pathway is cofactor biosynthesis; pyridoxine 5'-phosphate biosynthesis; pyridoxine 5'-phosphate from D-erythrose 4-phosphate: step 2/5. Functionally, catalyzes the oxidation of erythronate-4-phosphate to 3-hydroxy-2-oxo-4-phosphonooxybutanoate. The protein is Erythronate-4-phosphate dehydrogenase of Escherichia coli O139:H28 (strain E24377A / ETEC).